A 525-amino-acid chain; its full sequence is Ribosomal protein S6 kinase beta-1 (525 aa).

The segment at 1-54 is disordered; the sequence is MRRRRRRDGFYPAPDFRDREAEDMAGVFDIDLDQPEDAGSEDELEEGGQLNESM. The TOS motif motif lies at 28–32; sequence FDIDL. Positions 30 to 46 are enriched in acidic residues; sequence IDLDQPEDAGSEDELEE. A Protein kinase domain is found at 91-352; sequence FELLRVLGKG…AGEVQAHPFF (262 aa). ATP is bound by residues 97–105 and Lys-123; that span reads LGKGGYGKV. The Proton acceptor role is filled by Asp-218. Phosphothreonine; by PDPK1 is present on Thr-252. The region spanning 353 to 423 is the AGC-kinase C-terminal domain; it reads RHINWEELLA…VAPSVLESVK (71 aa). The interval 380–399 is disordered; sequence SQFDSKFTRQTPVDSPDDST. Residues 381-399 are compositionally biased toward polar residues; sequence QFDSKFTRQTPVDSPDDST. Ser-394 bears the Phosphoserine mark. Thr-412 is subject to Phosphothreonine; by MTOR, NEK6 and NEK7. The segment at 424–525 is autoinhibitory domain; the sequence is EKFSFEPKIR…KRPEHLRMNL (102 aa). Phosphoserine occurs at positions 434 and 441. Position 444 is a phosphothreonine (Thr-444). Phosphoserine occurs at positions 447 and 452. The interval 486-509 is disordered; the sequence is VTTSGEASAPLPIRQPNSGPYKKQ. Lys-516 is subject to N6-acetyllysine.

The protein belongs to the protein kinase superfamily. AGC Ser/Thr protein kinase family. S6 kinase subfamily. Interacts with PPP1R9A/neurabin-1. Interacts with RPTOR. Interacts with IRS1. Interacts with EIF3B and EIF3C. Interacts with TRAF4. Interacts with POLDIP3. Interacts (via N-terminus) with IER5. Post-translationally, phosphorylation at Thr-412 is regulated by mTORC1. The phosphorylation at this site is maintained by an agonist-dependent autophosphorylation mechanism. Activated by phosphorylation at Thr-252 by PDPK1. Dephosphorylation by PPP1CC at Thr-412 in mitochondrion.

It is found in the cytoplasm. The protein resides in the synapse. Its subcellular location is the synaptosome. The protein localises to the mitochondrion outer membrane. It localises to the mitochondrion. The catalysed reaction is L-seryl-[protein] + ATP = O-phospho-L-seryl-[protein] + ADP + H(+). It carries out the reaction L-threonyl-[protein] + ATP = O-phospho-L-threonyl-[protein] + ADP + H(+). Activation requires multiple phosphorylation events on serine/threonine residues. Activation appears to be first mediated by phosphorylation of multiple sites in the autoinhibitory domain, which facilitates phosphorylation at Thr-412, disrupting the autoinhibitory mechanism and allowing phosphorylation of Thr-252 by PDPK1. The active conformation of the kinase is believed to be stabilized by a mechanism involving three conserved phosphorylation sites located in the kinase domain activation loop (Thr-252) and in the AGC-kinase C-terminal domain (Ser-394 in the middle of the tail/linker region and Thr-412 within a hydrophobic motif at its end). Activated by mTORC1; isoform Alpha I and isoform Alpha II are sensitive to rapamycin, which inhibits activating phosphorylation at Thr-412. Activated by PDPK1. Its function is as follows. Serine/threonine-protein kinase that acts downstream of mTOR signaling in response to growth factors and nutrients to promote cell proliferation, cell growth and cell cycle progression. Regulates protein synthesis through phosphorylation of EIF4B, RPS6 and EEF2K, and contributes to cell survival by repressing the pro-apoptotic function of BAD. Under conditions of nutrient depletion, the inactive form associates with the EIF3 translation initiation complex. Upon mitogenic stimulation, phosphorylation by the mechanistic target of rapamycin complex 1 (mTORC1) leads to dissociation from the EIF3 complex and activation. The active form then phosphorylates and activates several substrates in the pre-initiation complex, including the EIF2B complex and the cap-binding complex component EIF4B. Also controls translation initiation by phosphorylating a negative regulator of EIF4A, PDCD4, targeting it for ubiquitination and subsequent proteolysis. Promotes initiation of the pioneer round of protein synthesis by phosphorylating POLDIP3/SKAR. In response to IGF1, activates translation elongation by phosphorylating EEF2 kinase (EEF2K), which leads to its inhibition and thus activation of EEF2. Also plays a role in feedback regulation of mTORC2 by mTORC1 by phosphorylating MAPKAP1/SIN1, MTOR and RICTOR, resulting in the inhibition of mTORC2 and AKT1 signaling. Also involved in feedback regulation of mTORC1 and mTORC2 by phosphorylating DEPTOR. Mediates cell survival by phosphorylating the pro-apoptotic protein BAD and suppressing its pro-apoptotic function. Phosphorylates mitochondrial URI1 leading to dissociation of a URI1-PPP1CC complex. The free mitochondrial PPP1CC can then dephosphorylate RPS6KB1 at Thr-412, which is proposed to be a negative feedback mechanism for the RPS6KB1 anti-apoptotic function. Mediates TNF-alpha-induced insulin resistance by phosphorylating IRS1 at multiple serine residues, resulting in accelerated degradation of IRS1. In cells lacking functional TSC1-2 complex, constitutively phosphorylates and inhibits GSK3B. May be involved in cytoskeletal rearrangement through binding to neurabin. Phosphorylates and activates the pyrimidine biosynthesis enzyme CAD, downstream of MTOR. Following activation by mTORC1, phosphorylates EPRS and thereby plays a key role in fatty acid uptake by adipocytes and also most probably in interferon-gamma-induced translation inhibition. The polypeptide is Ribosomal protein S6 kinase beta-1 (RPS6KB1) (Oryctolagus cuniculus (Rabbit)).